We begin with the raw amino-acid sequence, 380 residues long: Nucleoporin Nup43 (380 aa).

Met1 bears the N-acetylmethionine mark. WD repeat units follow at residues 8 to 57, 72 to 110, 127 to 166, 170 to 208, 215 to 255, and 259 to 299; these read FVSQ…NLDS, RHHG…QTLS, PSYS…AVRT, ADSS…NEPS, GDRV…MPVS, and AHEA…PEKS.

Component of the Nup107-160 subcomplex of the nuclear pore complex (NPC). The Nup107-160 subcomplex includes NUP160, NUP133, NUP107, NUP98, NUP85, NUP43, NUP37, SEH1 and SEC13.

The protein localises to the chromosome. It localises to the centromere. The protein resides in the kinetochore. It is found in the nucleus. Its subcellular location is the nuclear pore complex. Component of the Nup107-160 subcomplex of the nuclear pore complex (NPC). The Nup107-160 subcomplex is required for the assembly of a functional NPC. The Nup107-160 subcomplex is also required for normal kinetochore microtubule attachment, mitotic progression and chromosome segregation. The protein is Nucleoporin Nup43 (NUP43) of Homo sapiens (Human).